Here is a 485-residue protein sequence, read N- to C-terminus: Tektin-5 (485 aa).

Coiled-coil stretches lie at residues 113–185, 225–251, 342–385, and 423–443; these read SRLT…EVNC, QQQMRKLAQRIDLQMRDNRDAQHALER, FNAR…MAKE, and DDTLQTLKLRLRETQDMLQLL.

The protein belongs to the tektin family. As to quaternary structure, microtubule inner protein component of sperm flagellar doublet microtubules. Interacts with TEKT3. Post-translationally, ubiquitinated, leading to its degradation. Deubiquitinated by USP16, promoting its stability.

Its subcellular location is the cytoplasm. The protein localises to the cytoskeleton. It is found in the flagellum axoneme. In terms of biological role, sperm-specific microtubule inner protein (MIP) part of the dynein-decorated doublet microtubules (DMTs) in flagellar axoneme. Forms an extensive interaction network in different conformations that reinforces the helix bundle composed by other tektin proteins (TEKT1 to TEKT4) and MIPs to anchor the tektin bundle onto the tubulin wall of A-tubule of the sperm flagellum. In Macaca fascicularis (Crab-eating macaque), this protein is Tektin-5 (TEKT5).